Reading from the N-terminus, the 123-residue chain is Small ribosomal subunit protein uS12cz/uS12cy (123 aa).

Belongs to the universal ribosomal protein uS12 family. In terms of assembly, part of the 30S ribosomal subunit.

It is found in the plastid. The protein localises to the chloroplast. With S4 and S5 plays an important role in translational accuracy. Located at the interface of the 30S and 50S subunits. This Daucus carota (Wild carrot) protein is Small ribosomal subunit protein uS12cz/uS12cy (rps12-A).